A 157-amino-acid polypeptide reads, in one-letter code: ATP synthase subunit b (157 aa).

Residues 7-29 (LVSQAIAFSIFIWFTTKFVWPYL) form a helical membrane-spanning segment.

The protein belongs to the ATPase B chain family. As to quaternary structure, F-type ATPases have 2 components, F(1) - the catalytic core - and F(0) - the membrane proton channel. F(1) has five subunits: alpha(3), beta(3), gamma(1), delta(1), epsilon(1). F(0) has three main subunits: a(1), b(2) and c(10-14). The alpha and beta chains form an alternating ring which encloses part of the gamma chain. F(1) is attached to F(0) by a central stalk formed by the gamma and epsilon chains, while a peripheral stalk is formed by the delta and b chains.

It is found in the cell inner membrane. Functionally, f(1)F(0) ATP synthase produces ATP from ADP in the presence of a proton or sodium gradient. F-type ATPases consist of two structural domains, F(1) containing the extramembraneous catalytic core and F(0) containing the membrane proton channel, linked together by a central stalk and a peripheral stalk. During catalysis, ATP synthesis in the catalytic domain of F(1) is coupled via a rotary mechanism of the central stalk subunits to proton translocation. Its function is as follows. Component of the F(0) channel, it forms part of the peripheral stalk, linking F(1) to F(0). This chain is ATP synthase subunit b, found in Nitrosomonas eutropha (strain DSM 101675 / C91 / Nm57).